Reading from the N-terminus, the 369-residue chain is Flagellar P-ring protein (369 aa).

The signal sequence occupies residues 1-24 (MKTLHRCIGVALLALGALAGTAHA).

This sequence belongs to the FlgI family. As to quaternary structure, the basal body constitutes a major portion of the flagellar organelle and consists of four rings (L,P,S, and M) mounted on a central rod.

It is found in the periplasm. Its subcellular location is the bacterial flagellum basal body. In terms of biological role, assembles around the rod to form the L-ring and probably protects the motor/basal body from shearing forces during rotation. The protein is Flagellar P-ring protein of Ralstonia nicotianae (strain ATCC BAA-1114 / GMI1000) (Ralstonia solanacearum).